The primary structure comprises 257 residues: UPF0246 protein Ssed_1188 (257 aa).

Belongs to the UPF0246 family.

The chain is UPF0246 protein Ssed_1188 from Shewanella sediminis (strain HAW-EB3).